A 249-amino-acid polypeptide reads, in one-letter code: uncharacterized protein (249 aa).

The next 2 helical transmembrane spans lie at 49-69 (ILLS…CYLL) and 223-243 (IVMS…VHHL).

It localises to the cell membrane. This is an uncharacterized protein from Bacillus anthracis.